A 203-amino-acid polypeptide reads, in one-letter code: uncharacterized protein (203 aa).

Positions M1–F20 are cleaved as a signal peptide.

This is an uncharacterized protein from Pasteurella multocida (strain Pm70).